A 569-amino-acid polypeptide reads, in one-letter code: Sialic acid-binding Ig-like lectin 5 (569 aa).

Residues 1-16 form the signal peptide; sequence MRWAWLLPLLWAGCLA. Over 17 to 439 the chain is Extracellular; sequence TDGYSLSVTG…KSETSRGTVL (423 aa). Positions 18–116 constitute an Ig-like V-type domain; that stretch reads DGYSLSVTGS…DTGTYFFRLD (99 aa). 4 cysteine pairs are disulfide-bonded: cysteine 35–cysteine 163, cysteine 40–cysteine 96, cysteine 157–cysteine 206, and cysteine 265–cysteine 308. Asparagine 95 carries N-linked (GlcNAc...) asparagine glycosylation. Positions 114, 120, and 122 each coordinate N-acetylneuraminate. Ig-like C2-type domains follow at residues 139–224 and 229–324; these read PNIQ…QQLS and PQKM…VSLS. N-linked (GlcNAc...) asparagine glycans are attached at residues asparagine 151, asparagine 200, and asparagine 203. N-linked (GlcNAc...) asparagine glycans are attached at residues asparagine 369, asparagine 372, and asparagine 387. A helical transmembrane segment spans residues 440–460; it reads GAIWGAGLMALLAVCLCLIFF. The Cytoplasmic portion of the chain corresponds to 461–569; sequence TVKVLRKKSA…VYTEIKIHKC (109 aa). A disordered region spans residues 508 to 556; sequence HLNEPGSQTQKEQPPLATVPDTQKDEPELHYASLSFQGPMPPKPQNTEA. An ITIM motif motif is present at residues 536 to 541; the sequence is LHYASL. Positions 559–564 match the SLAM-like motif motif; the sequence is SVYTEI.

Belongs to the immunoglobulin superfamily. SIGLEC (sialic acid binding Ig-like lectin) family. Predominantly expressed by immature monocytic/myeloid lineage cells in bone marrow. Also found at lower levels in mature neutrophils and monocytes.

Its subcellular location is the membrane. In terms of biological role, putative adhesion molecule that mediates sialic-acid dependent binding to cells. Preferentially binds to alpha-2,3-linked sialic acid. The sialic acid recognition site may be masked by cis interactions with sialic acids on the same cell surface. This is Sialic acid-binding Ig-like lectin 5 (Siglec5) from Mus musculus (Mouse).